A 175-amino-acid polypeptide reads, in one-letter code: Inorganic pyrophosphatase (175 aa).

Substrate contacts are provided by Lys30, Arg44, and Tyr56. Mg(2+) contacts are provided by Asp66, Asp71, and Asp103. Tyr142 serves as a coordination point for substrate.

The protein belongs to the PPase family. As to quaternary structure, homohexamer. Mg(2+) is required as a cofactor.

It is found in the cytoplasm. It carries out the reaction diphosphate + H2O = 2 phosphate + H(+). Its function is as follows. Catalyzes the hydrolysis of inorganic pyrophosphate (PPi) forming two phosphate ions. This chain is Inorganic pyrophosphatase, found in Pseudomonas aeruginosa (strain ATCC 15692 / DSM 22644 / CIP 104116 / JCM 14847 / LMG 12228 / 1C / PRS 101 / PAO1).